The following is an 893-amino-acid chain: Major vault protein (893 aa).

Position 2 is an N-acetylalanine (A2). MVP repeat units lie at residues A2–R56, H57–P111, L112–Q164, A165–D217, A218–P272, I273–V323, Y324–A379, I380–V457, and V458–P520. Residue K444 forms a Glycyl lysine isopeptide (Lys-Gly) (interchain with G-Cter in SUMO2) linkage. S445 carries the post-translational modification Phosphoserine. A Glycyl lysine isopeptide (Lys-Gly) (interchain with G-Cter in SUMO2) cross-link involves residue K704. Residues Q856 to R893 are disordered.

As to quaternary structure, the vault ribonucleoprotein particle is a huge (400 A x 670 A) cage structure of 12.9 MDa. It consists of a dimer of half-vaults, with each half-vault comprising 39 identical major vault protein (MVP) chains, PARP4 and one or more vault RNAs (vRNAs). Interacts with TEP1. Interacts with PTEN and activated MAPK1. The phosphorylated protein interacts with the SH2 domains of PTPN11 and SRC. Interacts with APEX1. May interact with ZNF540. In terms of processing, phosphorylated on Tyr residues after EGF stimulation. Post-translationally, dephosphorylated by PTPN11.

Its subcellular location is the cytoplasm. The protein localises to the nucleus. Functionally, required for normal vault structure. Vaults are multi-subunit structures that may act as scaffolds for proteins involved in signal transduction. Vaults may also play a role in nucleo-cytoplasmic transport. Down-regulates IFNG-mediated STAT1 signaling and subsequent activation of JAK. Down-regulates SRC activity and signaling through MAP kinases. The chain is Major vault protein (MVP) from Pongo abelii (Sumatran orangutan).